The primary structure comprises 408 residues: MAKYLIRARIEIDGVVEKHDIIGAIFGQTEGLFGNEFDLRVLQDKGRIGRIQVNTKTQGSKTTGEILIPSNLDRVETALLAALIETVDKVGPYDASISIVDIVDLRMEKIKKIMERTVEILRRWGKEKTPDVKELIKSIQEYLKVPEPVSYGPEELPAGPDVDKAEEIIIVEGRADVINLLRYGYTNIIALGGARRVPDTIKKLAELKKTTLFVDGDHGGDLIMKEVLRNAKIDYIARAPPGREVEELSSREIEEALKKKIEIFQYLEEQVKQGNKEAQLLIQIQRRLHKLPEEVVKPPEKVAKEITETLSLPVKLIEDIKSLYGTLEAIFYSSQWDQVKRIPVRDLVSEIQASEPEKIHAIVFDGIITQRLIDAVVEKRVKILIGARLGKITFKTPELTILTFNELA.

The Toprim domain occupies 166–241; that stretch reads EEIIIVEGRA…KIDYIARAPP (76 aa). Mg(2+) is bound by residues Glu172, Asp215, and Asp217.

It belongs to the archaeal DnaG primase family. In terms of assembly, forms a ternary complex with MCM helicase and DNA. Component of the archaeal exosome complex. The cofactor is Mg(2+).

It catalyses the reaction ssDNA + n NTP = ssDNA/pppN(pN)n-1 hybrid + (n-1) diphosphate.. In terms of biological role, RNA polymerase that catalyzes the synthesis of short RNA molecules used as primers for DNA polymerase during DNA replication. Also part of the exosome, which is a complex involved in RNA degradation. Acts as a poly(A)-binding protein that enhances the interaction between heteromeric, adenine-rich transcripts and the exosome. The chain is DNA primase DnaG from Desulfurococcus amylolyticus (strain DSM 18924 / JCM 16383 / VKM B-2413 / 1221n) (Desulfurococcus kamchatkensis).